Here is a 255-residue protein sequence, read N- to C-terminus: NAP1-related protein 2 (255 aa).

Positions I19–K60 form a coiled coil. The segment at N213 to E255 is disordered. The segment covering D221–E255 has biased composition (acidic residues).

Belongs to the nucleosome assembly protein (NAP) family. Can form homomeric and heteromeric protein complexes with NRP1. Binds histones H2A and H2B and associates with chromatin in vivo. As to expression, ubiquitous.

It is found in the cytoplasm. The protein localises to the nucleus. Functionally, acts as a histone H2A/H2B chaperone in nucleosome assembly, playing a critical role for the correct expression of genes involved in root proliferation and patterning. Required with NRP1 for the maintenance of cell proliferation and differentiation in postembryonic root growth. Involved in both intramolecular and intermolecular somatic homologous recombination. The chain is NAP1-related protein 2 (NRP2) from Arabidopsis thaliana (Mouse-ear cress).